Consider the following 299-residue polypeptide: MATVLRAHSEHATWRDYLELTKPRVVLLMLITSLVGMFLATRAGVPWTVLLFGNLGIGLCAGAAAAVNHVVDRRIDSIMARTHKRPVTAGRVSPAAAIAFALLLATAGMGLLLLFTNQLAAWLTLASLLGYAVIYTGFLKRATPQNIVIGGLAGAAPPLLGWVAVTGHLSAEPLLLVLIIFAWTPPHFWALAIHRKAEYAKADIPMLPVTHGEHYTKVHILLYTLVMFAVTLLPYAIHMSGPLYLVCALLLGARFLHWAWVLYRDSKPHAAINTFKYSIWYLFLLFIALLADHYLLLNI.

Helical transmembrane passes span 25 to 45, 47 to 67, 95 to 115, 119 to 139, 147 to 167, 173 to 193, 218 to 238, 243 to 263, and 279 to 299; these read VVLL…RAGV, WTVL…AAAV, AAAI…LLLF, LAAW…TGFL, IVIG…AVTG, PLLL…ALAI, VHIL…YAIH, LYLV…WVLY, and IWYL…LLNI.

This sequence belongs to the UbiA prenyltransferase family. Protoheme IX farnesyltransferase subfamily.

Its subcellular location is the cell inner membrane. The catalysed reaction is heme b + (2E,6E)-farnesyl diphosphate + H2O = Fe(II)-heme o + diphosphate. It participates in porphyrin-containing compound metabolism; heme O biosynthesis; heme O from protoheme: step 1/1. Its function is as follows. Converts heme B (protoheme IX) to heme O by substitution of the vinyl group on carbon 2 of heme B porphyrin ring with a hydroxyethyl farnesyl side group. This is Protoheme IX farnesyltransferase from Ectopseudomonas mendocina (strain ymp) (Pseudomonas mendocina).